Reading from the N-terminus, the 137-residue chain is MHFRMKVLENSSKHNTPKKQKTFQHYLPAGDRCYSCIHCRANLAAHAELISKSFQGSQGKAYLFNAVVNVGCGPAEERVLLTGLHAVADIYCEICKTTLGWKYEHAFESSQKYKEGKFIIELAHMVKDNGWDEQNDS.

Residues 1–20 (MHFRMKVLENSSKHNTPKKQ) form a disordered region. In terms of domain architecture, Yippee spans 32–129 (RCYSCIHCRA…IELAHMVKDN (98 aa)). Zn(2+)-binding residues include C36, C39, C92, and C95.

Belongs to the yippee family.

This chain is Protein yippee-like F37A8.5, found in Caenorhabditis elegans.